The following is a 270-amino-acid chain: Cytosolic Fe-S cluster assembly factor NUBP2 homolog (270 aa).

21-28 (GKGGVGKS) is an ATP binding site. Positions 195 and 198 each coordinate [4Fe-4S] cluster.

The protein belongs to the Mrp/NBP35 ATP-binding proteins family. NUBP2/CFD1 subfamily. Heterotetramer of 2 NUBP1 and 2 NUBP2 chains. The cofactor is [4Fe-4S] cluster.

Its subcellular location is the cytoplasm. Functionally, component of the cytosolic iron-sulfur (Fe/S) protein assembly (CIA) machinery. Required for maturation of extramitochondrial Fe-S proteins. The NUBP1-NUBP2 heterotetramer forms a Fe-S scaffold complex, mediating the de novo assembly of an Fe-S cluster and its transfer to target apoproteins. In Nematostella vectensis (Starlet sea anemone), this protein is Cytosolic Fe-S cluster assembly factor NUBP2 homolog.